The sequence spans 292 residues: Syntaxin-19 (292 aa).

The t-SNARE coiled-coil homology domain maps to 207-269; sequence LSEIEQRHKE…NNTKEKFGLA (63 aa).

The protein belongs to the syntaxin family. Interacts with EGFR. As to expression, expressed in stomach, lung and skin (at protein level). In stomach, strongly expressed in the mucosa of the fundus, in epithelial cells of gastric pits, and in gastric glands (at protein level). In skin, expressed in the epidermis, dermis, and epithelial layer of the hair bulb (at protein level).

Its subcellular location is the cell membrane. It localises to the cytoplasm. Functionally, plays a role in endosomal trafficking of the epidermal growth factor receptor (EGFR). This is Syntaxin-19 from Mus musculus (Mouse).